Here is a 631-residue protein sequence, read N- to C-terminus: ATP-dependent RNA helicase mrh4, mitochondrial (631 aa).

Residues 1–45 constitute a mitochondrion transit peptide; the sequence is MNRLGRLPLPLPPSVCLFCRFRATASLPSSLQATRSMATARLRRR. A disordered region spans residues 68–112; the sequence is KERFGPFAGMNQTEARIRETPRARSRAAQKRSGEPEEDSQKESPL. Positions 98–108 are enriched in basic and acidic residues; the sequence is RSGEPEEDSQK. Positions 141 to 174 match the Q motif motif; that stretch reads TSFDQFQLLPVVRNSISSQALPGLVDVTPTPIQR. Basic and acidic residues predominate over residues 180 to 193; the sequence is LLEEPKTEKKPTKA. The tract at residues 180–199 is disordered; the sequence is LLEEPKTEKKPTKADDDEPR. The region spanning 194 to 406 is the Helicase ATP-binding domain; it reads DDDEPRYDQY…RKRYPDIKRL (213 aa). 207 to 214 is an ATP binding site; it reads AETGSGKT. Residues 229–249 are disordered; the sequence is EARDKELEKKEQEEKAREREE. The DEAD box motif lies at 353–356; sequence DEAD. In terms of domain architecture, Helicase C-terminal spans 455–631; the sequence is GPYASYVAPK…EGMFRGQALI (177 aa).

The protein belongs to the DEAD box helicase family. MRH4 subfamily.

Its subcellular location is the mitochondrion. The enzyme catalyses ATP + H2O = ADP + phosphate + H(+). ATP-binding RNA helicase involved in mitochondrial RNA metabolism. Required for maintenance of mitochondrial DNA. The protein is ATP-dependent RNA helicase mrh4, mitochondrial (mrh4) of Aspergillus fumigatus (strain ATCC MYA-4609 / CBS 101355 / FGSC A1100 / Af293) (Neosartorya fumigata).